The chain runs to 519 residues: Putative glucosylceramidase 4 (519 aa).

The signal sequence occupies residues 1–24; the sequence is MILNISVSLLIFLAFYGFSSDAKS. Glu256 serves as the catalytic Proton donor. The Nucleophile role is filled by Glu361.

The protein belongs to the glycosyl hydrolase 30 family.

It carries out the reaction a beta-D-glucosylceramide + H2O = an N-acyl-sphingoid base + D-glucose. The enzyme catalyses a beta-D-glucosyl-(1&lt;-&gt;1')-N-acylsphing-4-enine + H2O = an N-acylsphing-4-enine + D-glucose. The catalysed reaction is an N-acyl-1-beta-D-glucosyl-15-methylhexadecasphing-4-enine + H2O = an N-acyl-15-methylhexadecasphing-4-enine + D-glucose. It participates in lipid metabolism; sphingolipid metabolism. Glucosylceramidase that catalyzes the hydrolysis of glucosylceramides into free ceramides and glucose. C.elegans contains specific sphingoid bases, which are unique or different in structure compared to the sphingoid bases found in other animals. Two examples of these distinctive compounds are: 15-methylhexadecasphinganine and 15-methylhexadecasphing-4-enine. In Caenorhabditis elegans, this protein is Putative glucosylceramidase 4 (gba-4).